The following is a 59-amino-acid chain: Single-pass membrane and coiled-coil domain-containing protein 4 homolog (59 aa).

A compositionally biased stretch (basic residues) spans 1-11; the sequence is MAGRNKAKPRL. Positions 1–20 are disordered; the sequence is MAGRNKAKPRLSKKEKEERR. A coiled-coil region spans residues 10-30; that stretch reads RLSKKEKEERRKDMAEVQEKV. The chain crosses the membrane as a helical span at residues 30–50; the sequence is VFSVVVPVVVAFTVVIMLIVY.

This sequence belongs to the SMCO4 family.

Its subcellular location is the membrane. In Argas monolakensis (Mono lake bird tick), this protein is Single-pass membrane and coiled-coil domain-containing protein 4 homolog.